Reading from the N-terminus, the 881-residue chain is DNA mismatch repair protein MutS (881 aa).

612 to 619 (GPNMAGKS) provides a ligand contact to ATP.

The protein belongs to the DNA mismatch repair MutS family.

Functionally, this protein is involved in the repair of mismatches in DNA. It is possible that it carries out the mismatch recognition step. This protein has a weak ATPase activity. The sequence is that of DNA mismatch repair protein MutS from Clostridium tetani (strain Massachusetts / E88).